Reading from the N-terminus, the 367-residue chain is Glutamate 5-kinase (367 aa).

An ATP-binding site is contributed by Lys-9. Residues Ser-49, Asp-136, and Asn-148 each coordinate substrate. ATP is bound by residues 168–169 (TD) and 210–216 (TGGMKSK). The 75-residue stretch at 276-350 (SGQIEIDAGA…GMQSQQIQAR (75 aa)) folds into the PUA domain.

This sequence belongs to the glutamate 5-kinase family.

Its subcellular location is the cytoplasm. The enzyme catalyses L-glutamate + ATP = L-glutamyl 5-phosphate + ADP. It participates in amino-acid biosynthesis; L-proline biosynthesis; L-glutamate 5-semialdehyde from L-glutamate: step 1/2. Functionally, catalyzes the transfer of a phosphate group to glutamate to form L-glutamate 5-phosphate. The polypeptide is Glutamate 5-kinase (Bacillus anthracis).